We begin with the raw amino-acid sequence, 114 residues long: Flagellar hook-basal body complex protein FliE (114 aa).

This sequence belongs to the FliE family.

The protein localises to the bacterial flagellum basal body. In Burkholderia cenocepacia (strain ATCC BAA-245 / DSM 16553 / LMG 16656 / NCTC 13227 / J2315 / CF5610) (Burkholderia cepacia (strain J2315)), this protein is Flagellar hook-basal body complex protein FliE.